The following is a 136-amino-acid chain: Large ribosomal subunit protein bL19 (136 aa).

It belongs to the bacterial ribosomal protein bL19 family.

Its function is as follows. This protein is located at the 30S-50S ribosomal subunit interface and may play a role in the structure and function of the aminoacyl-tRNA binding site. In Xylella fastidiosa (strain 9a5c), this protein is Large ribosomal subunit protein bL19.